A 540-amino-acid chain; its full sequence is 2,3-bisphosphoglycerate-independent phosphoglycerate mutase (540 aa).

2 residues coordinate Mn(2+): Asp24 and Ser74. The active-site Phosphoserine intermediate is Ser74. Substrate is bound by residues His135, 165 to 166 (RD), Arg197, Arg203, 268 to 271 (RPDR), and Lys341. 5 residues coordinate Mn(2+): Asp408, His412, Asp449, His450, and His467.

Belongs to the BPG-independent phosphoglycerate mutase family. As to quaternary structure, monomer. The cofactor is Mn(2+).

It carries out the reaction (2R)-2-phosphoglycerate = (2R)-3-phosphoglycerate. It participates in carbohydrate degradation; glycolysis; pyruvate from D-glyceraldehyde 3-phosphate: step 3/5. Its function is as follows. Catalyzes the interconversion of 2-phosphoglycerate and 3-phosphoglycerate. This chain is 2,3-bisphosphoglycerate-independent phosphoglycerate mutase, found in Prochlorococcus marinus (strain MIT 9313).